The sequence spans 60 residues: UPF0291 protein CTC_01690.1 (60 aa).

The protein belongs to the UPF0291 family.

It is found in the cytoplasm. The chain is UPF0291 protein CTC_01690.1 from Clostridium tetani (strain Massachusetts / E88).